The following is a 1759-amino-acid chain: Histone-lysine N-methyltransferase ASHH2 (1759 aa).

Composition is skewed to basic and acidic residues over residues 154–165, 197–206, and 215–224; these read QEKEAPQAKEDE, ETTKHIKPDE, and RFDDGGKEGR. 5 disordered regions span residues 154–181, 197–237, 437–482, 515–556, and 738–816; these read QEKE…GIDT, ETTK…GSSD, CEAG…IESI, SNNI…NRNI, and DELR…VGRI. Positions 462-472 are enriched in basic residues; it reads SARHLRKSSRK. Residues 530 to 556 are compositionally biased toward polar residues; sequence RSQGNLNNGEHNRSSHNGNVEGSNRNI. A compositionally biased stretch (basic residues) spans 758 to 775; that stretch reads KKAKHPKSKSNGTKKGKS. Composition is skewed to basic and acidic residues over residues 776–797 and 804–816; these read KFSE…EQRK and GRDD…VGRI. The CW-type zinc-finger motif lies at 859–912; the sequence is YSTESAWVRCDDCFKWRRIPASVVGSIDESSRWICMNNSDKRFADCSKSQEMSN. Zn(2+) contacts are provided by Cys-868, Cys-871, Cys-893, and Cys-904. Positions 974 to 1024 constitute an AWS domain; the sequence is DEIMVCHCKPSPDGRLGCGEECLNRMLNIECLQGTCPAGDLCSNQQFQKRK. One can recognise an SET domain in the interval 1026–1143; it reads VKFERFQSGK…KGQELTFDYN (118 aa). Tyr-1142 lines the S-adenosyl-L-methionine pocket. Positions 1151 to 1167 constitute a Post-SET domain; it reads AAKKCYCGSSHCRGYIG. Disordered regions lie at residues 1225-1253, 1271-1345, 1496-1606, and 1727-1759; these read GYKD…PPPL, AVQQ…PGVN, ERSE…FSSP, and KQSV…KLNS. Positions 1232 to 1241 are enriched in polar residues; sequence DNTQTQSSVS. Low complexity predominate over residues 1284–1293; it reads STSPTSSSLS. Positions 1304–1316 are enriched in basic and acidic residues; it reads KTTKHGSGEDKKI. Positions 1317–1326 are enriched in basic residues; that stretch reads LPRPRPRMKT. A compositionally biased stretch (basic and acidic residues) spans 1511-1521; it reads ASQEPRYDHQS. Residues 1530-1556 show a composition bias toward polar residues; sequence SVTSSKAATPETASVSEGYSEPNSGLP. Basic and acidic residues predominate over residues 1566–1577; the sequence is RWDQPSKTKEQR. Residues 1581–1594 show a composition bias toward polar residues; the sequence is ILSQQTDETNGNQD.

Belongs to the class V-like SAM-binding methyltransferase superfamily. Histone-lysine methyltransferase family. SET2 subfamily. Interacts with FRI and SUF4, two components of the transcription activator complex FRI-C, and with SWC6, a component of the SWR1 chromatin-remodeling complex. Interacts with BZR2/BES1 and IWS1. As to expression, ubiquitous, with higher levels in young tissues, including shoot and root apex. Expressed in ovules, tapetum layer and microspores.

Its subcellular location is the nucleus. It localises to the chromosome. The protein resides in the centromere. It carries out the reaction N(6)-methyl-L-lysyl(36)-[histone H3] + S-adenosyl-L-methionine = N(6),N(6)-dimethyl-L-lysyl(36)-[histone H3] + S-adenosyl-L-homocysteine + H(+). It catalyses the reaction N(6),N(6)-dimethyl-L-lysyl(36)-[histone H3] + S-adenosyl-L-methionine = N(6),N(6),N(6)-trimethyl-L-lysyl(36)-[histone H3] + S-adenosyl-L-homocysteine + H(+). Its function is as follows. Histone methyltransferase involved in di and tri-methylation of 'Lys-36' of histone H3 (H3K36me2 and H3K36me3). Binds to H3 already mono- or di-methylated on 'Lys-4'(H3K4me1 or H3K4me2), but not to H3K4me3. H3K4me and H3K36me represent specific tags for epigenetic transcriptional activation. Positively regulates FLC transcription to prevent early flowering transition. Required for flowering transition in response to vernalization and for the maintenance of FLC expression in late embryos, but dispensable for the initial reactivation in early embryos during reprogramming. Also seems to modulate several traits including floral organ size, root size and dormancy. Promotes apical dominance. Directly involved in the tri-methylation of 'Lys-36' of histone H3 (H3K36me3) at LAZ5 chromatin to maintain a transcriptionally active state of LAZ5, a TIR-NB-LRR protein involved in innate immunity. Required for brassinosteroid (BR)-induced gene expression and histone H3 trimethylation on 'Lys-36' (H3K36me3) in BR-regulated genes. This chain is Histone-lysine N-methyltransferase ASHH2, found in Arabidopsis thaliana (Mouse-ear cress).